A 108-amino-acid polypeptide reads, in one-letter code: Cytochrome c6 (108 aa).

The N-terminal stretch at 1-23 is a signal peptide; that stretch reads MRLLFAFFIICHIFTNNVQLTFA. Heme c contacts are provided by Cys37, Cys40, His41, and Met81.

This sequence belongs to the cytochrome c family. PetJ subfamily. Monomer. Binds 1 heme c group covalently per subunit.

It is found in the plastid. It localises to the chloroplast thylakoid lumen. Its function is as follows. Functions as an electron carrier between membrane-bound cytochrome b6-f and photosystem I in oxygenic photosynthesis. This Gracilaria tenuistipitata var. liui (Red alga) protein is Cytochrome c6.